A 340-amino-acid chain; its full sequence is Protein-arginine kinase (340 aa).

Residues 21 to 242 (VVLSSRIRLA…EQIIMQERVA (222 aa)) form the Phosphagen kinase C-terminal domain. ATP-binding positions include 24 to 28 (SSRIR), His-79, Arg-113, 164 to 168 (RASVM), and 195 to 200 (RGIYGE).

The protein belongs to the ATP:guanido phosphotransferase family.

It catalyses the reaction L-arginyl-[protein] + ATP = N(omega)-phospho-L-arginyl-[protein] + ADP + H(+). Its function is as follows. Catalyzes the specific phosphorylation of arginine residues in proteins. This is Protein-arginine kinase from Listeria innocua serovar 6a (strain ATCC BAA-680 / CLIP 11262).